Reading from the N-terminus, the 425-residue chain is Nuclear hormone receptor family member nhr-13 (425 aa).

Positions 5–83 (PNSCEVCSSS…IGMKPLLVKS (79 aa)) form a DNA-binding region, nuclear receptor. 2 consecutive NR C4-type zinc fingers follow at residues 11–30 (CSSS…CKAC) and 46–71 (CIDQ…LKKC). The tract at residues 108–148 (VKENSEEIQNDDDPQESDAEMENESTPGPSSEPSENVSAEN) is disordered. The span at 113–130 (EEIQNDDDPQESDAEMEN) shows a compositional bias: acidic residues. Low complexity predominate over residues 131 to 142 (ESTPGPSSEPSE). Positions 147–414 (ENQETVTKFL…KSMISLTSFW (268 aa)) constitute an NR LBD domain.

The protein belongs to the nuclear hormone receptor family. As to quaternary structure, may interact with nuclear hormone receptor nhr-49.

The protein localises to the nucleus. Orphan nuclear receptor. Involved in regulating fatty acid desaturase genes, acting in concert with nuclear hormone receptor nhr-49. This is Nuclear hormone receptor family member nhr-13 (nhr-13) from Caenorhabditis elegans.